Consider the following 224-residue polypeptide: MSIRDWPAAERPREKLLEWGAASLSDAELLAIFLRTGVSGRSAVDLARHLLAQFGGLRPLLEASQALFNQQLGLGPAKFAQLQAVLEMAKRHMAERLRHDSVLESPKAVRDYLKAMLRHEPHEIFGCLFLDSRHRVLGFEALSQGTIDAAMVYPRQVVKRALAYNAAALILCHNHPSGSLEPSAADRKLTKLLQKALEVVDVRVLDHIIVGDGDPLSMAEYGWL.

The MPN domain maps to 102–224 (VLESPKAVRD…PLSMAEYGWL (123 aa)). Zn(2+)-binding residues include H173, H175, and D186. The short motif at 173–186 (HNHPSGSLEPSAAD) is the JAMM motif element.

It belongs to the UPF0758 family.

This chain is UPF0758 protein PFLU_5982, found in Pseudomonas fluorescens (strain SBW25).